A 305-amino-acid polypeptide reads, in one-letter code: Spermatogenesis-associated protein 4 (305 aa).

The Calponin-homology (CH) domain occupies 49-155 (SRLSRSVLRW…EEVYTLLTHR (107 aa)).

Its subcellular location is the nucleus. May play a role in apoptosis regulation. This is Spermatogenesis-associated protein 4 (SPATA4) from Pan troglodytes (Chimpanzee).